The following is a 364-amino-acid chain: Methylthioribose-1-phosphate isomerase (364 aa).

Residues 51–53 (RGA), R88, and Q199 contribute to the substrate site. D240 (proton donor) is an active-site residue. 250–251 (NK) contributes to the substrate binding site.

This sequence belongs to the eIF-2B alpha/beta/delta subunits family. MtnA subfamily.

It carries out the reaction 5-(methylsulfanyl)-alpha-D-ribose 1-phosphate = 5-(methylsulfanyl)-D-ribulose 1-phosphate. The protein operates within amino-acid biosynthesis; L-methionine biosynthesis via salvage pathway; L-methionine from S-methyl-5-thio-alpha-D-ribose 1-phosphate: step 1/6. Functionally, catalyzes the interconversion of methylthioribose-1-phosphate (MTR-1-P) into methylthioribulose-1-phosphate (MTRu-1-P). The polypeptide is Methylthioribose-1-phosphate isomerase (Cereibacter sphaeroides (strain KD131 / KCTC 12085) (Rhodobacter sphaeroides)).